Here is a 301-residue protein sequence, read N- to C-terminus: tRNA pseudouridine synthase B (301 aa).

Catalysis depends on Asp45, which acts as the Nucleophile.

This sequence belongs to the pseudouridine synthase TruB family. Type 1 subfamily.

The catalysed reaction is uridine(55) in tRNA = pseudouridine(55) in tRNA. Responsible for synthesis of pseudouridine from uracil-55 in the psi GC loop of transfer RNAs. The protein is tRNA pseudouridine synthase B of Streptomyces avermitilis (strain ATCC 31267 / DSM 46492 / JCM 5070 / NBRC 14893 / NCIMB 12804 / NRRL 8165 / MA-4680).